Reading from the N-terminus, the 863-residue chain is Glycerol-3-phosphate acyltransferase (863 aa).

The interval 1-29 (MPKKNSPLLPKETTTTQSSVDTSGSSNLT) is disordered. Over residues 12-29 (ETTTTQSSVDTSGSSNLT) the composition is skewed to polar residues. An HXXXXD motif motif is present at residues 343 to 348 (SHRSHI).

Belongs to the GPAT/DAPAT family.

The protein localises to the cell inner membrane. It carries out the reaction sn-glycerol 3-phosphate + an acyl-CoA = a 1-acyl-sn-glycero-3-phosphate + CoA. Its pathway is phospholipid metabolism; CDP-diacylglycerol biosynthesis; CDP-diacylglycerol from sn-glycerol 3-phosphate: step 1/3. The sequence is that of Glycerol-3-phosphate acyltransferase from Xylella fastidiosa (strain M12).